A 32-amino-acid chain; its full sequence is Corticostatin-related peptide RK-1 (32 aa).

3 disulfide bridges follow: Cys-3/Cys-29, Cys-5/Cys-19, and Cys-9/Cys-28.

Its subcellular location is the secreted. In terms of biological role, has antimicrobial activity against E.coli and activates ion channel activity. The chain is Corticostatin-related peptide RK-1 from Oryctolagus cuniculus (Rabbit).